The sequence spans 715 residues: MKTFSESHKTVFVVDHCPYMSESCRQHVEFDMLTKNRTQGIIPLAPISKSLWTCAVEASMEYCRIMYDIFPFRKLVNFIVSDSRSRTLNSWNREDQNLQELMAALAVIGPPNPRADPECCSILHGLVEAVESLCKITDFQHESRTALMGNADWVANRGRIICITNAKSDSHVQMLEDCVNETIHEHNKMAAGSDHLMQIQKCHLVLLHTYPVGEDSLVSDRPKKELSNVLVSEVHSVKAGRHLSTKLNQLVQLHFDLASTTITNIPMKPTLSVCDQEEQHANTSANYDVELLHHKEAHVDFIKSGEGYTGSSSIRENSLKETVTLKWCTPRTNSVELHYCTGAFRISPVDVNSRPSSCLTNFLLNGRSVLLEQPRKSGSKVISHMLSSHGGEIFLHVLSSSRSILEDPPSISEGCGGRVTDYRITDFGEFMRENRLMPFPEQSYQMDGGPEVPLERAKEQLERHTRYWPMIISQTTIFNMQAVVPLASVIVKESLSEEDLLNCQKTIYNLVDMERKNDPLPISTAGTRGKGPKRDEQYRIMWNELETLVRAHVSGSERHQRVMECLMACRSKPPEEEERKKRGRKREDKEEKGEKLNKDHEHDKKGQESERIKSVLDQEKEDLAEAEVIKDSPDSPEPPNKKPHIVIEDTGPAEKSKGPMSLLSLWSSRINTANSRKHQEFVGRLNSVNNKAELYQHLKEENGGEGVENGKASRQ.

Disordered stretches follow at residues 572–612 (KPPE…SERI) and 626–659 (AEVIKDSPDSPEPPNKKPHIVIEDTGPAEKSKGP). Positions 581-591 (KRGRKREDKEE) match the Nuclear localization signal (NLS) motif. Residues 658–703 (GPMSLLSLWSSRINTANSRKHQEFVGRLNSVNNKAELYQHLKEENG) form a cleavage module binding motif (CMBM) region.

Belongs to the Integrator subunit 13 family. In terms of assembly, component of the Integrator complex, composed of core subunits INTS1, INTS2, INTS3, INTS4, INTS5, INTS6, INTS7, INTS8, INTS9/RC74, INTS10, INTS11/CPSF3L, INTS12, INTS13, INTS14 and INTS15. The core complex associates with protein phosphatase 2A subunits PPP2CA and PPP2R1A, to form the Integrator-PP2A (INTAC) complex. INTS13 is part of the tail subcomplex, composed of INTS10, INTS13, INTS14 and INTS15.

Its subcellular location is the nucleus. It is found in the cytoplasm. Component of the integrator complex, a multiprotein complex that terminates RNA polymerase II (Pol II) transcription in the promoter-proximal region of genes. The integrator complex provides a quality checkpoint during transcription elongation by driving premature transcription termination of transcripts that are unfavorably configured for transcriptional elongation: the complex terminates transcription by (1) catalyzing dephosphorylation of the C-terminal domain (CTD) of Pol II subunit POLR2A/RPB1 and SUPT5H/SPT5, (2) degrading the exiting nascent RNA transcript via endonuclease activity and (3) promoting the release of Pol II from bound DNA. The integrator complex is also involved in terminating the synthesis of non-coding Pol II transcripts, such as enhancer RNAs (eRNAs), small nuclear RNAs (snRNAs), telomerase RNAs and long non-coding RNAs (lncRNAs). Within the integrator complex, INTS13 is part of the integrator tail module and acts as a platform for the recruitment of transcription factors at promoters. Plays a role in gastrulation and early embryogenesis. This Xenopus laevis (African clawed frog) protein is Integrator complex subunit 13.